Here is a 398-residue protein sequence, read N- to C-terminus: Succinate--CoA ligase [ADP-forming] subunit beta (398 aa).

The ATP-grasp domain occupies 9–237 (RDLFETHGVP…AGGLDILELK (229 aa)). Residues Lys45, 52–54 (GRG), Ala94, and Glu99 each bind ATP. 2 residues coordinate Mg(2+): Asn191 and Asp205. Residues Asn257 and 319-321 (GIT) each bind substrate.

It belongs to the succinate/malate CoA ligase beta subunit family. In terms of assembly, heterotetramer of two alpha and two beta subunits. Mg(2+) serves as cofactor.

The enzyme catalyses succinate + ATP + CoA = succinyl-CoA + ADP + phosphate. The catalysed reaction is GTP + succinate + CoA = succinyl-CoA + GDP + phosphate. It functions in the pathway carbohydrate metabolism; tricarboxylic acid cycle; succinate from succinyl-CoA (ligase route): step 1/1. Its function is as follows. Succinyl-CoA synthetase functions in the citric acid cycle (TCA), coupling the hydrolysis of succinyl-CoA to the synthesis of either ATP or GTP and thus represents the only step of substrate-level phosphorylation in the TCA. The beta subunit provides nucleotide specificity of the enzyme and binds the substrate succinate, while the binding sites for coenzyme A and phosphate are found in the alpha subunit. The polypeptide is Succinate--CoA ligase [ADP-forming] subunit beta (Corynebacterium glutamicum (strain ATCC 13032 / DSM 20300 / JCM 1318 / BCRC 11384 / CCUG 27702 / LMG 3730 / NBRC 12168 / NCIMB 10025 / NRRL B-2784 / 534)).